The sequence spans 218 residues: OPA3-like protein (218 aa).

The stretch at 129–179 (NEIMEKQFVLQKKKNELQSSTEEIDSTEKDFDELHKVILKVERELHTLRQN) forms a coiled coil. The disordered stretch occupies residues 175–218 (TLRQNTPSQNEQAEATPSKEIPRETVSEKADHPPSSNTKSVSTG). A compositionally biased stretch (polar residues) spans 176 to 189 (LRQNTPSQNEQAEA). The segment covering 194 to 206 (EIPRETVSEKADH) has biased composition (basic and acidic residues). The segment covering 208-218 (PSSNTKSVSTG) has biased composition (polar residues).

Belongs to the OPA3 family.

The sequence is that of OPA3-like protein from Schizosaccharomyces pombe (strain 972 / ATCC 24843) (Fission yeast).